Reading from the N-terminus, the 146-residue chain is P antigen family member 1 (146 aa).

Positions 16–146 are disordered; sequence YVESSEESSD…PEEDEGQSQP (131 aa). Over residues 19 to 32 the composition is skewed to acidic residues; the sequence is SSEESSDEQPDEVE. The residue at position 63 (Ser-63) is a Phosphoserine. Basic and acidic residues predominate over residues 79–92; that stretch reads PDTKRVCLRNEEQM. Phosphoserine is present on Ser-105. Positions 107–120 are enriched in basic and acidic residues; that stretch reads EQVHPKTGCERGDG. The residue at position 144 (Ser-144) is a Phosphoserine.

This sequence belongs to the GAGE family. As to expression, isolated from prostate cancer cell lines; expression associated with progression to androgen insensitive phenotype. Expressed in normal testis and at lower level in normal placenta.

The chain is P antigen family member 1 (PAGE1) from Homo sapiens (Human).